The sequence spans 460 residues: Chromosomal replication initiator protein DnaA (460 aa).

Positions 1-84 (MAVSLWQQCI…RFDIGSRPSA (84 aa)) are domain I, interacts with DnaA modulators. The tract at residues 84-123 (AKKPEPAPVAAVRVPNPQTKASVGTSFNTTEPVVNANHRS) is domain II. The domain III, AAA+ region stretch occupies residues 124–340 (NINPTYQFDN…GALNRVIANA (217 aa)). ATP-binding residues include glycine 168, glycine 170, lysine 171, and threonine 172. The interval 341–460 (NFTGRPITID…YANLIRTLSS (120 aa)) is domain IV, binds dsDNA.

This sequence belongs to the DnaA family. In terms of assembly, oligomerizes as a right-handed, spiral filament on DNA at oriC.

It is found in the cytoplasm. In terms of biological role, plays an essential role in the initiation and regulation of chromosomal replication. ATP-DnaA binds to the origin of replication (oriC) to initiate formation of the DNA replication initiation complex once per cell cycle. Binds the DnaA box (a 9 base pair repeat at the origin) and separates the double-stranded (ds)DNA. Forms a right-handed helical filament on oriC DNA; dsDNA binds to the exterior of the filament while single-stranded (ss)DNA is stabiized in the filament's interior. The ATP-DnaA-oriC complex binds and stabilizes one strand of the AT-rich DNA unwinding element (DUE), permitting loading of DNA polymerase. After initiation quickly degrades to an ADP-DnaA complex that is not apt for DNA replication. Binds acidic phospholipids. This chain is Chromosomal replication initiator protein DnaA, found in Shewanella sp. (strain MR-7).